The following is a 145-amino-acid chain: UPF0735 ACT domain-containing protein CLD_1535 (145 aa).

Positions 69-144 constitute an ACT domain; that stretch reads TIGLLLGHER…NVIKVDLIAM (76 aa).

It belongs to the UPF0735 family.

The protein is UPF0735 ACT domain-containing protein CLD_1535 of Clostridium botulinum (strain Okra / Type B1).